Consider the following 118-residue polypeptide: Iron-sulfur cluster assembly protein CyaY (118 aa).

Belongs to the frataxin family.

Involved in iron-sulfur (Fe-S) cluster assembly. May act as a regulator of Fe-S biogenesis. The chain is Iron-sulfur cluster assembly protein CyaY from Buchnera aphidicola subsp. Baizongia pistaciae (strain Bp).